The primary structure comprises 145 residues: Zinc finger C2H2 protein ECU06_1150 (145 aa).

Residues 35–57 form a C2H2-type 1; atypical zinc finger; it reads KDCARYGEAQASKHALLAHARRH. Residues 63-85 form a C2H2-type 2 zinc finger; that stretch reads FECHLCGKDYTRSDPLKKHLLRH.

In Encephalitozoon cuniculi (strain GB-M1) (Microsporidian parasite), this protein is Zinc finger C2H2 protein ECU06_1150.